A 957-amino-acid chain; its full sequence is Glycine dehydrogenase (decarboxylating) (957 aa).

Lysine 708 carries the N6-(pyridoxal phosphate)lysine modification.

It belongs to the GcvP family. In terms of assembly, the glycine cleavage system is composed of four proteins: P, T, L and H. Pyridoxal 5'-phosphate serves as cofactor.

It catalyses the reaction N(6)-[(R)-lipoyl]-L-lysyl-[glycine-cleavage complex H protein] + glycine + H(+) = N(6)-[(R)-S(8)-aminomethyldihydrolipoyl]-L-lysyl-[glycine-cleavage complex H protein] + CO2. Its function is as follows. The glycine cleavage system catalyzes the degradation of glycine. The P protein binds the alpha-amino group of glycine through its pyridoxal phosphate cofactor; CO(2) is released and the remaining methylamine moiety is then transferred to the lipoamide cofactor of the H protein. This chain is Glycine dehydrogenase (decarboxylating), found in Escherichia coli O1:K1 / APEC.